A 434-amino-acid chain; its full sequence is E3 ubiquitin-protein ligase siah-1 (434 aa).

A disordered region spans residues 27–88 (FEEDENAGPE…NGNTPSVTIP (62 aa)). A compositionally biased stretch (low complexity) spans 43 to 55 (SSSSASSQRSSAS). The segment covering 74-88 (MSNNQNGNTPSVTIP) has biased composition (polar residues). Residues 171–206 (CPVCLEYMLPPYMQCPSGHLVCSNCRPKLQCCPTCR) form an RING-type; degenerate zinc finger. An SBD region spans residues 220 to 415 (IANTVRFPCK…LGINVTISRI (196 aa)). Residues 223 to 283 (TVRFPCKFSN…VMDHLKKVHK (61 aa)) form an SIAH-type; degenerate zinc finger. Zn(2+) contacts are provided by cysteine 228, cysteine 235, histidine 247, cysteine 251, cysteine 258, cysteine 265, histidine 277, and histidine 282.

This sequence belongs to the SINA (Seven in absentia) family. In terms of assembly, interacts with tir-1.

The enzyme catalyses S-ubiquitinyl-[E2 ubiquitin-conjugating enzyme]-L-cysteine + [acceptor protein]-L-lysine = [E2 ubiquitin-conjugating enzyme]-L-cysteine + N(6)-ubiquitinyl-[acceptor protein]-L-lysine.. It functions in the pathway protein modification; protein ubiquitination. Functionally, E3 ubiquitin-protein ligase that mediates ubiquitination and subsequent proteasomal degradation of target proteins. E3 ubiquitin ligases accept ubiquitin from an E2 ubiquitin-conjugating enzyme in the form of a thioester and then directly transfers the ubiquitin to targeted substrates. It probably triggers the ubiquitin-mediated degradation of different substrates. The sequence is that of E3 ubiquitin-protein ligase siah-1 from Caenorhabditis briggsae.